A 431-amino-acid chain; its full sequence is Glutamate-1-semialdehyde 2,1-aminomutase (431 aa).

N6-(pyridoxal phosphate)lysine is present on K269.

The protein belongs to the class-III pyridoxal-phosphate-dependent aminotransferase family. HemL subfamily. In terms of assembly, homodimer. It depends on pyridoxal 5'-phosphate as a cofactor.

It localises to the cytoplasm. It catalyses the reaction (S)-4-amino-5-oxopentanoate = 5-aminolevulinate. It functions in the pathway porphyrin-containing compound metabolism; protoporphyrin-IX biosynthesis; 5-aminolevulinate from L-glutamyl-tRNA(Glu): step 2/2. The protein operates within porphyrin-containing compound metabolism; chlorophyll biosynthesis. The chain is Glutamate-1-semialdehyde 2,1-aminomutase from Chlorobium chlorochromatii (strain CaD3).